The primary structure comprises 778 residues: Endonuclease MutS2 (778 aa).

332-339 (GPNTGGKT) lines the ATP pocket. Positions 703 to 778 (IDLRGKMVDE…GLGCTVVTLK (76 aa)) constitute a Smr domain.

This sequence belongs to the DNA mismatch repair MutS family. MutS2 subfamily. In terms of assembly, homodimer. Binds to stalled ribosomes, contacting rRNA.

Its function is as follows. Endonuclease that is involved in the suppression of homologous recombination and thus may have a key role in the control of bacterial genetic diversity. Acts as a ribosome collision sensor, splitting the ribosome into its 2 subunits. Detects stalled/collided 70S ribosomes which it binds and splits by an ATP-hydrolysis driven conformational change. Acts upstream of the ribosome quality control system (RQC), a ribosome-associated complex that mediates the extraction of incompletely synthesized nascent chains from stalled ribosomes and their subsequent degradation. Probably generates substrates for RQC. This is Endonuclease MutS2 from Fusobacterium nucleatum subsp. nucleatum (strain ATCC 25586 / DSM 15643 / BCRC 10681 / CIP 101130 / JCM 8532 / KCTC 2640 / LMG 13131 / VPI 4355).